A 219-amino-acid polypeptide reads, in one-letter code: UPF0502 protein Gura_3445 (219 aa).

A disordered region spans residues 162-181; sequence AGEPDLPDDTPAPPPEPARQ.

This sequence belongs to the UPF0502 family.

The chain is UPF0502 protein Gura_3445 from Geotalea uraniireducens (strain Rf4) (Geobacter uraniireducens).